Reading from the N-terminus, the 1070-residue chain is RecBCD enzyme subunit RecC (1070 aa).

It belongs to the RecC family. In terms of assembly, heterotrimer of RecB, RecC and RecD. All subunits contribute to DNA-binding.

In terms of biological role, a helicase/nuclease that prepares dsDNA breaks (DSB) for recombinational DNA repair. Binds to DSBs and unwinds DNA via a highly rapid and processive ATP-dependent bidirectional helicase activity. Unwinds dsDNA until it encounters a Chi (crossover hotspot instigator) sequence from the 3' direction. Cuts ssDNA a few nucleotides 3' to the Chi site. The properties and activities of the enzyme are changed at Chi. The Chi-altered holoenzyme produces a long 3'-ssDNA overhang and facilitates RecA-binding to the ssDNA for homologous DNA recombination and repair. Holoenzyme degrades any linearized DNA that is unable to undergo homologous recombination. In the holoenzyme this subunit recognizes the wild-type Chi sequence, and when added to isolated RecB increases its ATP-dependent helicase processivity. This chain is RecBCD enzyme subunit RecC, found in Buchnera aphidicola subsp. Acyrthosiphon pisum (strain APS) (Acyrthosiphon pisum symbiotic bacterium).